The primary structure comprises 325 residues: Eukaryotic translation initiation factor 3 subunit I (325 aa).

4 WD repeats span residues 8-47 (GHER…RLGT), 50-91 (GHTG…ALLK), 144-183 (CNDS…VLVN), and 186-225 (EHSR…HQKT). The residue at position 219 (Thr-219) is a Phosphothreonine. Position 264 is an N6-acetyllysine (Lys-264). Residue Lys-282 forms a Glycyl lysine isopeptide (Lys-Gly) (interchain with G-Cter in ubiquitin) linkage. The WD 5 repeat unit spans residues 283 to 324 (GHFGPINSVAFHPDGKSYSSGGEDGYVRIHYFDPQYFEFEFE). Tyr-308 is subject to Phosphotyrosine.

Belongs to the eIF-3 subunit I family. Component of the eukaryotic translation initiation factor 3 (eIF-3) complex, which is composed of 13 subunits: EIF3A, EIF3B, EIF3C, EIF3D, EIF3E, EIF3F, EIF3G, EIF3H, EIF3I, EIF3J, EIF3K, EIF3L and EIF3M. The eIF-3 complex appears to include 3 stable modules: module A is composed of EIF3A, EIF3B, EIF3G and EIF3I; module B is composed of EIF3F, EIF3H, and EIF3M; and module C is composed of EIF3C, EIF3D, EIF3E, EIF3K and EIF3L. EIF3C of module C binds EIF3B of module A and EIF3H of module B, thereby linking the three modules. EIF3J is a labile subunit that binds to the eIF-3 complex via EIF3B. The eIF-3 complex may interact with RPS6KB1 under conditions of nutrient depletion. Mitogenic stimulation may lead to binding and activation of a complex composed of MTOR and RPTOR, leading to phosphorylation and release of RPS6KB1 and binding of EIF4B to eIF-3. Phosphorylated by TGF-beta type II receptor.

Its subcellular location is the cytoplasm. In terms of biological role, component of the eukaryotic translation initiation factor 3 (eIF-3) complex, which is required for several steps in the initiation of protein synthesis. The eIF-3 complex associates with the 40S ribosome and facilitates the recruitment of eIF-1, eIF-1A, eIF-2:GTP:methionyl-tRNAi and eIF-5 to form the 43S pre-initiation complex (43S PIC). The eIF-3 complex stimulates mRNA recruitment to the 43S PIC and scanning of the mRNA for AUG recognition. The eIF-3 complex is also required for disassembly and recycling of post-termination ribosomal complexes and subsequently prevents premature joining of the 40S and 60S ribosomal subunits prior to initiation. The eIF-3 complex specifically targets and initiates translation of a subset of mRNAs involved in cell proliferation, including cell cycling, differentiation and apoptosis, and uses different modes of RNA stem-loop binding to exert either translational activation or repression. The protein is Eukaryotic translation initiation factor 3 subunit I (Eif3i) of Mus musculus (Mouse).